Consider the following 391-residue polypeptide: Formate-dependent phosphoribosylglycinamide formyltransferase (391 aa).

Residues Glu18–Leu19 and Glu78 each bind N(1)-(5-phospho-beta-D-ribosyl)glycinamide. Residues Arg110, Lys151, Ser156–Gln161, Glu191–Ile194, and Glu199 contribute to the ATP site. Residues Asp115–Leu305 enclose the ATP-grasp domain. Mg(2+) is bound by residues Glu264 and Glu276. N(1)-(5-phospho-beta-D-ribosyl)glycinamide is bound by residues Asp283, Lys353, and Arg360–Arg361.

Belongs to the PurK/PurT family. In terms of assembly, homodimer.

It catalyses the reaction N(1)-(5-phospho-beta-D-ribosyl)glycinamide + formate + ATP = N(2)-formyl-N(1)-(5-phospho-beta-D-ribosyl)glycinamide + ADP + phosphate + H(+). Its pathway is purine metabolism; IMP biosynthesis via de novo pathway; N(2)-formyl-N(1)-(5-phospho-D-ribosyl)glycinamide from N(1)-(5-phospho-D-ribosyl)glycinamide (formate route): step 1/1. Its function is as follows. Involved in the de novo purine biosynthesis. Catalyzes the transfer of formate to 5-phospho-ribosyl-glycinamide (GAR), producing 5-phospho-ribosyl-N-formylglycinamide (FGAR). Formate is provided by PurU via hydrolysis of 10-formyl-tetrahydrofolate. This is Formate-dependent phosphoribosylglycinamide formyltransferase from Prochlorococcus marinus (strain MIT 9301).